The primary structure comprises 398 residues: S-adenosylmethionine synthase (398 aa).

His-16 lines the ATP pocket. Residue Asp-18 coordinates Mg(2+). Residue Glu-44 coordinates K(+). L-methionine contacts are provided by Glu-57 and Gln-100. Positions Gln-100–Glu-110 are flexible loop. ATP-binding positions include Asp-175–Lys-177, Arg-242–Phe-243, Asp-251, Arg-257–Lys-258, Ala-274, and Lys-278. An L-methionine-binding site is contributed by Asp-251. Position 282 (Lys-282) interacts with L-methionine.

This sequence belongs to the AdoMet synthase family. In terms of assembly, homotetramer; dimer of dimers. Mg(2+) serves as cofactor. It depends on K(+) as a cofactor.

The protein localises to the cytoplasm. The catalysed reaction is L-methionine + ATP + H2O = S-adenosyl-L-methionine + phosphate + diphosphate. It participates in amino-acid biosynthesis; S-adenosyl-L-methionine biosynthesis; S-adenosyl-L-methionine from L-methionine: step 1/1. Catalyzes the formation of S-adenosylmethionine (AdoMet) from methionine and ATP. The overall synthetic reaction is composed of two sequential steps, AdoMet formation and the subsequent tripolyphosphate hydrolysis which occurs prior to release of AdoMet from the enzyme. The polypeptide is S-adenosylmethionine synthase (Streptococcus agalactiae serotype Ia (strain ATCC 27591 / A909 / CDC SS700)).